Consider the following 348-residue polypeptide: D-erythrose-4-phosphate dehydrogenase (348 aa).

NAD(+)-binding positions include 12–13 (RI) and Arg-81. Substrate is bound by residues 154–156 (SCT), Arg-200, 213–214 (TK), and Arg-236. Residue Cys-155 is the Nucleophile of the active site. Residue Asn-318 coordinates NAD(+).

This sequence belongs to the glyceraldehyde-3-phosphate dehydrogenase family. Epd subfamily. Homotetramer.

It is found in the cytoplasm. It catalyses the reaction D-erythrose 4-phosphate + NAD(+) + H2O = 4-phospho-D-erythronate + NADH + 2 H(+). It functions in the pathway cofactor biosynthesis; pyridoxine 5'-phosphate biosynthesis; pyridoxine 5'-phosphate from D-erythrose 4-phosphate: step 1/5. Its function is as follows. Catalyzes the NAD-dependent conversion of D-erythrose 4-phosphate to 4-phosphoerythronate. In Salmonella paratyphi B (strain ATCC BAA-1250 / SPB7), this protein is D-erythrose-4-phosphate dehydrogenase.